A 580-amino-acid polypeptide reads, in one-letter code: UPF0329 protein ECU06_0080 (580 aa).

The span at 308–330 (RQKRREREMEKSMKELLRDEEKA) shows a compositional bias: basic and acidic residues. Residues 308–384 (RQKRREREME…KTGKKSKGGR (77 aa)) are disordered. The segment covering 331–340 (KSKKGRKKKS) has biased composition (basic residues). The span at 351–363 (SETEEVEASEEME) shows a compositional bias: acidic residues. The segment covering 372 to 384 (ARRKTGKKSKGGR) has biased composition (basic residues).

This sequence belongs to the UPF0329 family.

The chain is UPF0329 protein ECU06_0080 from Encephalitozoon cuniculi (strain GB-M1) (Microsporidian parasite).